The primary structure comprises 519 residues: Probable anion transporter 3, chloroplastic (519 aa).

The N-terminal 76 residues, 1-76 (MAPPGQLLPL…PPPPATSLPG (76 aa)), are a transit peptide targeting the chloroplast. Residues 56–72 (LPFAPPRRLSRPPPPAT) show a composition bias toward pro residues. Residues 56–82 (LPFAPPRRLSRPPPPATSLPGASPGGG) are disordered. A run of 12 helical transmembrane segments spans residues 100–120 (VAAM…VMSV), 138–158 (VVQS…GALV), 166–186 (VMAY…WAAA), 188–208 (SLWL…VALP), 229–249 (IAMA…PIIM), 253–273 (GIFG…LVWI), 326–346 (WALI…LSWM), 362–382 (AWFS…AGVV), 403–423 (IGFV…SPVI), 424–444 (ASAW…GFLV), 460–480 (MSNT…GFFV), and 488–508 (GFLI…DIFA).

The protein belongs to the major facilitator superfamily. Sodium/anion cotransporter (TC 2.A.1.14) family.

It localises to the plastid. The protein resides in the chloroplast membrane. In terms of biological role, probable anion transporter. The chain is Probable anion transporter 3, chloroplastic (PHT4;3) from Oryza sativa subsp. japonica (Rice).